A 276-amino-acid polypeptide reads, in one-letter code: MKAQILREMKVLTAIEPEFEVQRRVAFIKTKLKEARSKALVLGISGGVDSSTAGRLCQLAVDSLNHENSQGGYQFIAVRLPYQIQKDEHEAQLACQFIQPSKLVTVNVHQGVDGVHSATVAALAEAGLPLPDVAKVDFVKGNVKARMRMIAQYELAGLVGGLVVGTDHSAENITGFYTKWGDGACDLAPLFGLNKRQVRQLAAYLGAPKSLVHKAPTADLEDNKPLLEDEVALGLTYAQIDDFLEGKDVGKAVEDKLIGIYKATQHKRQPIPTIYD.

An ATP-binding site is contributed by 43 to 50 (GISGGVDS). Mg(2+) is bound at residue Asp-49. Residue Arg-146 coordinates deamido-NAD(+). Thr-166 provides a ligand contact to ATP. Glu-171 serves as a coordination point for Mg(2+). Lys-179 and Asp-186 together coordinate deamido-NAD(+). ATP is bound by residues Lys-195 and Thr-217. 266–267 (HK) contacts deamido-NAD(+).

Belongs to the NAD synthetase family. In terms of assembly, homodimer.

The catalysed reaction is deamido-NAD(+) + NH4(+) + ATP = AMP + diphosphate + NAD(+) + H(+). The protein operates within cofactor biosynthesis; NAD(+) biosynthesis; NAD(+) from deamido-NAD(+) (ammonia route): step 1/1. Catalyzes the ATP-dependent amidation of deamido-NAD to form NAD. Uses ammonia as a nitrogen source. This is NH(3)-dependent NAD(+) synthetase from Shewanella baltica (strain OS185).